The sequence spans 249 residues: General transcription factor IIF subunit 2 (249 aa).

Alanine 2 is subject to N-acetylalanine. Lysine 22, lysine 33, and lysine 137 each carry N6-acetyllysine. Phosphoserine is present on serine 142. DNA-binding residues include glycine 227 and histidine 229. Position 248 is a phosphoserine (serine 248).

This sequence belongs to the TFIIF beta subunit family. Heterodimer of an alpha and a beta subunit. Interacts with HTATSF1 and GPBP1. Interacts with URI1. Interacts with GTF2B (via N-terminus); this interaction is inhibited in presence of GTF2F1. Part of TBP-based Pol II pre-initiation complex (PIC), in which Pol II core assembles with general transcription factors and other specific initiation factors including GTF2E1, GTF2E2, GTF2F1, GTF2F2, TCEA1, ERCC2, ERCC3, GTF2H2, GTF2H3, GTF2H4, GTF2H5, GTF2A1, GTF2A2, GTF2B and TBP; this large multi-subunit PIC complex mediates DNA unwinding and targets Pol II core to the transcription start site where the first phosphodiester bond forms.

It is found in the nucleus. In terms of biological role, TFIIF is a general transcription initiation factor that binds to RNA polymerase II and helps to recruit it to the initiation complex in collaboration with TFIIB. The sequence is that of General transcription factor IIF subunit 2 (GTF2F2) from Homo sapiens (Human).